A 400-amino-acid polypeptide reads, in one-letter code: Enoyl-[acyl-carrier-protein] reductase [NADH] 2 (400 aa).

Residues 48–53 (GASSGF), 75–76 (FE), 112–113 (DA), and 141–142 (LA) each bind NAD(+). Residue tyrosine 227 coordinates substrate. The Proton donor role is filled by tyrosine 237. Residues lysine 246 and 275-277 (LVT) contribute to the NAD(+) site.

It belongs to the TER reductase family. As to quaternary structure, monomer.

It carries out the reaction a 2,3-saturated acyl-[ACP] + NAD(+) = a (2E)-enoyl-[ACP] + NADH + H(+). It participates in lipid metabolism; fatty acid biosynthesis. Its function is as follows. Involved in the final reduction of the elongation cycle of fatty acid synthesis (FAS II). Catalyzes the reduction of a carbon-carbon double bond in an enoyl moiety that is covalently linked to an acyl carrier protein (ACP). The sequence is that of Enoyl-[acyl-carrier-protein] reductase [NADH] 2 from Photobacterium profundum (strain SS9).